Reading from the N-terminus, the 547-residue chain is Membrane protein insertase YidC (547 aa).

Residues Leu-8–Phe-28 form a helical membrane-spanning segment. Residues Gln-37 to Thr-50 are compositionally biased toward low complexity. The disordered stretch occupies residues Gln-37–Thr-62. The segment covering Ser-51–Thr-62 has biased composition (polar residues). 5 helical membrane-spanning segments follow: residues Val-325–Leu-345, Phe-348–Tyr-368, Gly-414–Ile-434, Trp-449–Met-469, and Leu-495–Trp-515.

The protein belongs to the OXA1/ALB3/YidC family. Type 1 subfamily. Interacts with the Sec translocase complex via SecD. Specifically interacts with transmembrane segments of nascent integral membrane proteins during membrane integration.

It is found in the cell inner membrane. Functionally, required for the insertion and/or proper folding and/or complex formation of integral membrane proteins into the membrane. Involved in integration of membrane proteins that insert both dependently and independently of the Sec translocase complex, as well as at least some lipoproteins. Aids folding of multispanning membrane proteins. The sequence is that of Membrane protein insertase YidC from Helicobacter pylori (strain ATCC 700392 / 26695) (Campylobacter pylori).